A 294-amino-acid polypeptide reads, in one-letter code: Release factor glutamine methyltransferase (294 aa).

S-adenosyl-L-methionine-binding positions include 131–135, Asp154, and Asn202; that span reads GTGSG. Position 202 to 205 (202 to 205) interacts with substrate; the sequence is NPPY.

This sequence belongs to the protein N5-glutamine methyltransferase family. PrmC subfamily.

The enzyme catalyses L-glutaminyl-[peptide chain release factor] + S-adenosyl-L-methionine = N(5)-methyl-L-glutaminyl-[peptide chain release factor] + S-adenosyl-L-homocysteine + H(+). Methylates the class 1 translation termination release factors RF1/PrfA and RF2/PrfB on the glutamine residue of the universally conserved GGQ motif. The chain is Release factor glutamine methyltransferase from Chlorobaculum tepidum (strain ATCC 49652 / DSM 12025 / NBRC 103806 / TLS) (Chlorobium tepidum).